Consider the following 342-residue polypeptide: Alpha-tocopherol transfer protein-like (342 aa).

Positions 1–31 (MSEESDSLRTSPSVASLSENELPPPPEPPGY) are disordered. The span at 8–19 (LRTSPSVASLSE) shows a compositional bias: polar residues. Residues 117 to 282 (KPSALKDVLA…EYGGTAGELD (166 aa)) form the CRAL-TRIO domain.

Its function is as follows. May act as a protein that binds a hydrophobic ligand. The chain is Alpha-tocopherol transfer protein-like (TTPAL) from Pongo abelii (Sumatran orangutan).